The sequence spans 256 residues: Stanniocalcin (256 aa).

An N-terminal signal peptide occupies residues 1-18; sequence MLAKFGLCAVFLVLGTAA. Residues 19–33 constitute a propeptide that is removed on maturation; that stretch reads TFDTDPEEASPRRAR. The N-linked (GlcNAc...) asparagine glycan is linked to Asn-62.

The protein belongs to the stanniocalcin family. As to quaternary structure, homodimer; disulfide-linked. In terms of tissue distribution, produced and secreted by the corpuscles of Stannius.

It localises to the secreted. Its primary function is the prevention of hypercalcemia. Upon release into the circulation, it lowers calcium transport by the gills, thereby reducing its rate of influx from the environment into the extracellular compartment. STC also stimulates phosphate reabsorption by renal proximal tubules. The consequence of this action is increased levels of plasma phosphate, which combines with excess calcium and promotes its disposal into bone and scales. This Oncorhynchus kisutch (Coho salmon) protein is Stanniocalcin (stc).